The sequence spans 359 residues: MISKLSVNPTFSPSYNIIVDSVLDFSHILEYVTNKQVLVVTNTTVAKLYLTKFLAALVDDLDVRTCILEDGEQYKSQQSLDKILSTLLENHFTRNSTVLVALGGGVIGDITGFAAAIYQRGIDFIQIPTTLLSQVDSSVGGKTAINHQLGKNMIGAFYQPKVVYTSIEFYKTLLQREYIAGMAEVVKYAFISKDFYLWLDSNRDKILAKDSVTLIEMVKRSCQIKAQVVAMDEKELTGARAILNFGHTFGHAIEKCQNYRGLKHGEAVGVGMAQAIDFSHYLGLISQQQAKDFKDFIVSFGISIDFPNDICQKEFLEAMLLDKKNSNKELKFILIENIGSLSLQKQSKNELEQFLDISR.

NAD(+)-binding positions include 70–75 (DGEQYK), 105–109 (GVIGD), 129–130 (TT), lysine 142, lysine 151, and 169–172 (FYKT). The Zn(2+) site is built by glutamate 184, histidine 247, and histidine 264.

The protein belongs to the sugar phosphate cyclases superfamily. Dehydroquinate synthase family. Co(2+) is required as a cofactor. It depends on Zn(2+) as a cofactor. NAD(+) serves as cofactor.

It localises to the cytoplasm. The catalysed reaction is 7-phospho-2-dehydro-3-deoxy-D-arabino-heptonate = 3-dehydroquinate + phosphate. Its pathway is metabolic intermediate biosynthesis; chorismate biosynthesis; chorismate from D-erythrose 4-phosphate and phosphoenolpyruvate: step 2/7. In terms of biological role, catalyzes the conversion of 3-deoxy-D-arabino-heptulosonate 7-phosphate (DAHP) to dehydroquinate (DHQ). The protein is 3-dehydroquinate synthase of Francisella tularensis subsp. holarctica (strain OSU18).